Reading from the N-terminus, the 943-residue chain is UvrABC system protein A (943 aa).

32–39 (GLSGSGKS) serves as a coordination point for ATP. A C4-type zinc finger spans residues 251 to 278 (CPVCGFTVPELEPRLFSFNAPFGSCSEC). 2 ABC transporter domains span residues 308–589 (WNPI…SKSI) and 609–937 (GNGR…HYLK). 641–648 (GVSGSGKS) is an ATP binding site. The C4-type zinc finger occupies 740–766 (CEACSGDGIIKIEMHFLPDVYVACEVC).

The protein belongs to the ABC transporter superfamily. UvrA family. As to quaternary structure, forms a heterotetramer with UvrB during the search for lesions.

Its subcellular location is the cytoplasm. Its function is as follows. The UvrABC repair system catalyzes the recognition and processing of DNA lesions. UvrA is an ATPase and a DNA-binding protein. A damage recognition complex composed of 2 UvrA and 2 UvrB subunits scans DNA for abnormalities. When the presence of a lesion has been verified by UvrB, the UvrA molecules dissociate. This chain is UvrABC system protein A, found in Streptococcus pneumoniae serotype 4 (strain ATCC BAA-334 / TIGR4).